The chain runs to 857 residues: Bifunctional uridylyltransferase/uridylyl-removing enzyme (857 aa).

Residues 1–322 form a uridylyltransferase region; that stretch reads MDTTPELLLC…FPSESMVTRE (322 aa). The segment at 323-679 is uridylyl-removing; the sequence is INDRFVERQG…ARISPAGEGL (357 aa). An HD domain is found at 441 to 563; that stretch reads VDQHILMVVR…VGNGRYLTAL (123 aa). ACT domains are found at residues 680–760 and 788–857; these read QVAV…DPTQ and LLSV…ALAI.

Belongs to the GlnD family. Requires Mg(2+) as cofactor.

The enzyme catalyses [protein-PII]-L-tyrosine + UTP = [protein-PII]-uridylyl-L-tyrosine + diphosphate. It carries out the reaction [protein-PII]-uridylyl-L-tyrosine + H2O = [protein-PII]-L-tyrosine + UMP + H(+). Its activity is regulated as follows. Uridylyltransferase (UTase) activity is inhibited by glutamine, while glutamine activates uridylyl-removing (UR) activity. Functionally, modifies, by uridylylation and deuridylylation, the PII regulatory proteins (GlnB and homologs), in response to the nitrogen status of the cell that GlnD senses through the glutamine level. Under low glutamine levels, catalyzes the conversion of the PII proteins and UTP to PII-UMP and PPi, while under higher glutamine levels, GlnD hydrolyzes PII-UMP to PII and UMP (deuridylylation). Thus, controls uridylylation state and activity of the PII proteins, and plays an important role in the regulation of nitrogen assimilation and metabolism. The polypeptide is Bifunctional uridylyltransferase/uridylyl-removing enzyme (Cupriavidus metallidurans (strain ATCC 43123 / DSM 2839 / NBRC 102507 / CH34) (Ralstonia metallidurans)).